The chain runs to 548 residues: ComP-specific O-oligosaccharyltransferase (548 aa).

Helical transmembrane passes span 8–28 (IKNY…IIPN), 32–52 (LSST…LLTV), 68–88 (WFLF…IYFF), 91–111 (FFFS…GFNE), 119–139 (IVKK…LIAI), 164–184 (LGQP…LCYL), 189–209 (SLNN…NVMT), 213–233 (SAWI…QKKI), 239–259 (IFFN…FNLI), 331–351 (MLWN…CFLI), 363–383 (LFLF…YPFA), and 418–438 (TLFL…VLDI).

It belongs to the PglL O-oligosaccharyltransferase family.

The protein resides in the cell membrane. Specifically catalyzes the glycosylation of the pilin-like competence factor ComP. This chain is ComP-specific O-oligosaccharyltransferase, found in Acinetobacter baylyi (strain ATCC 33305 / BD413 / ADP1).